Here is a 386-residue protein sequence, read N- to C-terminus: Glutamate 5-kinase (386 aa).

Position 28 (lysine 28) interacts with ATP. Positions 68, 155, and 167 each coordinate substrate. 187–188 is a binding site for ATP; it reads TD. Residues 294 to 372 enclose the PUA domain; it reads RGRLVLDDGA…EKIESILGYI (79 aa).

Belongs to the glutamate 5-kinase family.

Its subcellular location is the cytoplasm. It catalyses the reaction L-glutamate + ATP = L-glutamyl 5-phosphate + ADP. It functions in the pathway amino-acid biosynthesis; L-proline biosynthesis; L-glutamate 5-semialdehyde from L-glutamate: step 1/2. Its function is as follows. Catalyzes the transfer of a phosphate group to glutamate to form L-glutamate 5-phosphate. This Hahella chejuensis (strain KCTC 2396) protein is Glutamate 5-kinase.